The primary structure comprises 598 residues: Terpenoid synthase 1 (598 aa).

Positions 362, 366, 494, and 502 each coordinate Mg(2+). A DDXXD motif motif is present at residues 362 to 366 (DDTCD).

It belongs to the terpene synthase family. Tpsa subfamily. Mg(2+) serves as cofactor. It depends on Mn(2+) as a cofactor. As to expression, expressed exclusively in siliques.

The protein resides in the cytoplasm. The protein operates within secondary metabolite biosynthesis; terpenoid biosynthesis. The chain is Terpenoid synthase 1 (TPS01) from Arabidopsis thaliana (Mouse-ear cress).